A 153-amino-acid polypeptide reads, in one-letter code: Ribonuclease H (153 aa).

The region spanning 1-142 is the RNase H type-1 domain; it reads MLKTIKIFSD…CDHLARESAK (142 aa). Mg(2+) contacts are provided by Asp-10, Glu-48, Asp-70, and Asp-134.

Belongs to the RNase H family. In terms of assembly, monomer. The cofactor is Mg(2+).

It is found in the cytoplasm. It catalyses the reaction Endonucleolytic cleavage to 5'-phosphomonoester.. Its function is as follows. Endonuclease that specifically degrades the RNA of RNA-DNA hybrids. The sequence is that of Ribonuclease H from Buchnera aphidicola subsp. Baizongia pistaciae (strain Bp).